A 366-amino-acid chain; its full sequence is Probable quinol oxidase subunit 2 (366 aa).

Positions 1 to 19 are cleaved as a signal peptide; it reads MSKFKSLLLLFGTLILLSG. Residue C20 is the site of N-palmitoyl cysteine attachment. A lipid anchor (S-diacylglycerol cysteine) is attached at C20. The next 2 membrane-spanning stretches (helical) occupy residues 38–58 and 80–100; these read FLIL…LGMF and AIIE…LAIP. The segment at 330-366 is disordered; sequence EPYNNEFKKDESKNAKEMKKISKDAQDQDNDDHGGGH. Residues 335–366 are compositionally biased toward basic and acidic residues; sequence EFKKDESKNAKEMKKISKDAQDQDNDDHGGGH.

This sequence belongs to the cytochrome c oxidase subunit 2 family.

It localises to the cell membrane. The catalysed reaction is 2 a quinol + O2 = 2 a quinone + 2 H2O. Its function is as follows. Catalyzes quinol oxidation with the concomitant reduction of oxygen to water. Subunit II transfers the electrons from a quinol to the binuclear center of the catalytic subunit I. The chain is Probable quinol oxidase subunit 2 (qoxA) from Staphylococcus aureus (strain bovine RF122 / ET3-1).